The primary structure comprises 862 residues: Protein translocase subunit SecA (862 aa).

ATP-binding positions include Gln-86, 104–108, and Asp-499; that span reads GEGKT. Zn(2+)-binding residues include Cys-848, Cys-850, Cys-859, and His-860.

Belongs to the SecA family. Monomer and homodimer. Part of the essential Sec protein translocation apparatus which comprises SecA, SecYEG and auxiliary proteins SecDF-YajC and YidC. Zn(2+) is required as a cofactor.

The protein resides in the cell inner membrane. It is found in the cytoplasm. The enzyme catalyses ATP + H2O + cellular proteinSide 1 = ADP + phosphate + cellular proteinSide 2.. Functionally, part of the Sec protein translocase complex. Interacts with the SecYEG preprotein conducting channel. Has a central role in coupling the hydrolysis of ATP to the transfer of proteins into and across the cell membrane, serving both as a receptor for the preprotein-SecB complex and as an ATP-driven molecular motor driving the stepwise translocation of polypeptide chains across the membrane. The chain is Protein translocase subunit SecA from Ehrlichia chaffeensis (strain ATCC CRL-10679 / Arkansas).